The sequence spans 807 residues: Leucine--tRNA ligase (807 aa).

The 'HIGH' region motif lies at 40–51 (PYPSGSGLHVGH). Residues 576-580 (KMSKS) carry the 'KMSKS' region motif. Residue Lys-579 coordinates ATP.

This sequence belongs to the class-I aminoacyl-tRNA synthetase family.

The protein localises to the cytoplasm. The enzyme catalyses tRNA(Leu) + L-leucine + ATP = L-leucyl-tRNA(Leu) + AMP + diphosphate. In Chlorobaculum parvum (strain DSM 263 / NCIMB 8327) (Chlorobium vibrioforme subsp. thiosulfatophilum), this protein is Leucine--tRNA ligase.